The primary structure comprises 89 residues: Ribonuclease P protein component 1 (89 aa).

This sequence belongs to the eukaryotic/archaeal RNase P protein component 1 family. In terms of assembly, consists of a catalytic RNA component and at least 4-5 protein subunits.

The protein resides in the cytoplasm. The catalysed reaction is Endonucleolytic cleavage of RNA, removing 5'-extranucleotides from tRNA precursor.. Part of ribonuclease P, a protein complex that generates mature tRNA molecules by cleaving their 5'-ends. The polypeptide is Ribonuclease P protein component 1 (Thermoplasma volcanium (strain ATCC 51530 / DSM 4299 / JCM 9571 / NBRC 15438 / GSS1)).